A 424-amino-acid polypeptide reads, in one-letter code: Serine--tRNA ligase (424 aa).

232–234 (TAE) provides a ligand contact to L-serine. An ATP-binding site is contributed by 263–265 (RQE). Residue Glu286 coordinates L-serine. Residue 350 to 353 (EIGS) coordinates ATP. Ser386 provides a ligand contact to L-serine.

The protein belongs to the class-II aminoacyl-tRNA synthetase family. Type-1 seryl-tRNA synthetase subfamily. Homodimer. The tRNA molecule binds across the dimer.

It localises to the cytoplasm. The enzyme catalyses tRNA(Ser) + L-serine + ATP = L-seryl-tRNA(Ser) + AMP + diphosphate + H(+). The catalysed reaction is tRNA(Sec) + L-serine + ATP = L-seryl-tRNA(Sec) + AMP + diphosphate + H(+). The protein operates within aminoacyl-tRNA biosynthesis; selenocysteinyl-tRNA(Sec) biosynthesis; L-seryl-tRNA(Sec) from L-serine and tRNA(Sec): step 1/1. Catalyzes the attachment of serine to tRNA(Ser). Is also able to aminoacylate tRNA(Sec) with serine, to form the misacylated tRNA L-seryl-tRNA(Sec), which will be further converted into selenocysteinyl-tRNA(Sec). The chain is Serine--tRNA ligase from Aster yellows witches'-broom phytoplasma (strain AYWB).